Reading from the N-terminus, the 433-residue chain is Mitochondrial inner membrane protein OXA1L (433 aa).

Over 1–108 (MARNLVCGRW…QCATEPSFTE (108 aa)) the chain is Mitochondrial intermembrane. Residues 109–129 (LGLGSYTPVGLIQNLLEYIHV) traverse the membrane as a helical segment. The Mitochondrial matrix segment spans residues 130 to 134 (DLGLP). Residues 135–155 (WWGAIATCTVLARCLVFPLIV) form a helical membrane-spanning segment. The Mitochondrial intermembrane segment spans residues 156–207 (KGQREAAKIHNHMPEMQKFSARIREAKLAGDQAEFYKATIEMTRYQKKHDIK). The helical transmembrane segment at 208–228 (LLRPLILPLTQAPVFISFFIA) threads the bilayer. Residues 229-255 (LREMANLPVPSLQTGGLWWFQDLTVSD) lie on the Mitochondrial matrix side of the membrane. The helical transmembrane segment at 256–276 (PIYVLPLVVTATMWCVLELGA) threads the bilayer. The Mitochondrial intermembrane segment spans residues 277–293 (ETGVQSNDLQFMRNIIR). The helical transmembrane segment at 294-314 (VMPLVVLPVTIHFPSAVFMYW) threads the bilayer. At 315-433 (LSSNVFSLCQ…AKKPWQDTLG (119 aa)) the chain is on the mitochondrial matrix side. Residue Ser359 is modified to Phosphoserine. A phosphothreonine mark is found at Thr395 and Thr397. The segment at 397-433 (THNPLLQHDPSHPPKAPNSNNSSIKANAKKPWQDTLG) is disordered. Low complexity predominate over residues 413 to 426 (PNSNNSSIKANAKK).

It belongs to the OXA1/ALB3/YidC family. As to quaternary structure, monomer; predominantly monomeric at low salt concentrations. Homooligomer; predominantly homooligomeric at high salt concentrations. Associates with the mitochondrial ribosome. Associates preferentially as a dimer with the large ribosomal subunit 39S of the mitochondrial ribosome. Interacts with OXA1L; promoting cotranslational quality control in mitochondria.

The protein localises to the mitochondrion inner membrane. In terms of biological role, mitochondrial membrane insertase that mediates the cotranslational insertion of integral membrane proteins into the mitochondrial inner membrane. Essential for the activity and assembly of cytochrome oxidase. Required for the correct biogenesis of ATP synthase and complex I in mitochondria. The sequence is that of Mitochondrial inner membrane protein OXA1L (Oxa1l) from Mus musculus (Mouse).